The chain runs to 247 residues: Complement C1q subcomponent subunit B (247 aa).

The N-terminal stretch at 1–22 (MKTPRGSVLVLLLLNLLRVSWA) is a signal peptide. Glutamine 23 is modified (pyrrolidone carboxylic acid). A 4-hydroxyproline mark is found at proline 29, proline 32, proline 35, proline 47, and proline 50. The tract at residues 30–78 (SIPGIPGIPGKPGSDGKPGTPGTKGEKGLPGLVSHLNENGEKGDPGFPG) is disordered. The Collagen-like domain occupies 39–98 (GKPGSDGKPGTPGTKGEKGLPGLVSHLNENGEKGDPGFPGMPGKVGPKGPIGPKGVPGPP). Positions 40–52 (KPGSDGKPGTPGT) are enriched in low complexity. Residues lysine 53 and lysine 56 each carry the 5-hydroxylysine modification. At proline 59 the chain carries 4-hydroxyproline. A 5-hydroxylysine modification is found at lysine 71. Proline 77 and proline 80 each carry 4-hydroxyproline. 2 positions are modified to 5-hydroxylysine: lysine 86 and lysine 92. 4-hydroxyproline occurs at positions 95 and 98. Residue lysine 104 is modified to 5-hydroxylysine. Residues 111 to 247 (KATQKIAFSA…GFMLFPDTEA (137 aa)) form the C1q domain. An intrachain disulfide couples cysteine 175 to cysteine 192. Ca(2+)-binding residues include aspartate 193, tyrosine 194, and glutamine 200.

As to quaternary structure, core component of the complement C1 complex, a calcium-dependent complex composed of 1 molecule of the C1Q subcomplex, 2 molecules of C1R and 2 molecules of C1S. The C1Q subcomplex is composed 18 subunits: 3 chains of C1QA, C1QB, and C1QC trimerize to form 6 collagen-like triple helices connected to six globular ligand-recognition modules (C1q domain). Post-translationally, hydroxylated on lysine and proline residues. Hydroxylated lysine residues can be glycosylated. Bovine C1Q contains up to 66.3 hydroxylysine-galactosylglucose residues. Total percentage hydroxylysine residues glycosylated is 92.0%. Contains no hydroxylysine-monosaccharides.

It localises to the secreted. The protein localises to the cell surface. The C1Q subcomplex is inhibited by sulfated molecules, such as triterpenoid sulfates, heparan sulfate, or chondroitin sulfates. Core component of the complement C1 complex, a multiprotein complex that initiates the classical pathway of the complement system, a cascade of proteins that leads to phagocytosis and breakdown of pathogens and signaling that strengthens the adaptive immune system. The classical complement pathway is initiated by the C1Q subcomplex of the C1 complex, which specifically binds IgG or IgM immunoglobulins complexed with antigens, forming antigen-antibody complexes on the surface of pathogens: C1QA, together with C1QB and C1QC, specifically recognizes and binds the Fc regions of IgG or IgM via its C1q domain. Immunoglobulin-binding activates the proenzyme C1R, which cleaves C1S, initiating the proteolytic cascade of the complement system. The C1Q subcomplex is activated by a hexamer of IgG complexed with antigens, while it is activated by a pentameric IgM. The C1Q subcomplex also recognizes and binds phosphatidylserine exposed on the surface of cells undergoing programmed cell death, possibly promoting activation of the complement system. The polypeptide is Complement C1q subcomponent subunit B (C1QB) (Bos taurus (Bovine)).